Here is a 464-residue protein sequence, read N- to C-terminus: CD-NTase-associated protein 4 (464 aa).

The interval 1–228 (MSASLLEKQS…FENFICHALE (228 aa)) is N-terminal endonuclease domain. The C-terminal SAVED domain stretch occupies residues 229–464 (EDRTQWLSDP…EYMPTAELNI (236 aa)).

The protein belongs to the Cap4 nuclease family. In terms of assembly, a monomer in the absence of cAAA, in its presence it forms oligomers.

With respect to regulation, DNase activity is activated upon ligand binding. In terms of biological role, effector DNase of a CBASS antivirus system. CBASS (cyclic oligonucleotide-based antiphage signaling system) provides immunity against bacteriophage. The CD-NTase protein synthesizes cyclic nucleotides in response to infection; these serve as specific second messenger signals. The signals activate a diverse range of effectors, leading to bacterial cell death and thus abortive phage infection. A type II-C CBASS system. Functionally, probably in the presence of its endogenous cyclic nucleotide (synthesized by the cognate CD-NTase protein in the CBASS operon), or of 2',3',3'-cyclic AMP-AMP-AMP (cAAA) synthesized by Acinetobacter sp. ATCC 27244, endonucleolytically degrades dsDNA in a non-sequence specific manner. It is not activated by other cyclic nucleotides. The chain is CD-NTase-associated protein 4 from Moraxella osloensis.